A 106-amino-acid chain; its full sequence is Protein S40-3 (106 aa).

A disordered region spans residues 1 to 65; that stretch reads MSEEFQESEV…TEEEGEMTPP (65 aa). A compositionally biased stretch (basic and acidic residues) spans 16–41; sequence SFTRKDNKISHNNENYERKSTEKDKI.

The protein belongs to the senescence regulator S40 family.

The protein resides in the nucleus. In terms of biological role, regulates senescence either by modulating WRKY53 or by activating SAG12. Affects the natural variation of cyst nematodes sex ratio and susceptibility to parasitic nematodes, depending on single nucleotide polymorphism (SNPs) between cultivars. In Arabidopsis thaliana (Mouse-ear cress), this protein is Protein S40-3.